Consider the following 116-residue polypeptide: U16-barytoxin-Tl1d (116 aa).

The first 20 residues, 1-20 (MKTIIVFLSLLVLATKFGDA), serve as a signal peptide directing secretion. The propeptide occupies 21–74 (NEGVNQEQMKEVIQNEFREDFLNEMAAMSLLQQLEAIESTLLEKEADRNSRQKR). Cystine bridges form between cysteine 75-cysteine 90, cysteine 82-cysteine 95, and cysteine 89-cysteine 110.

This sequence belongs to the neurotoxin 14 (magi-1) family. 06 (ICK-Trit) subfamily. As to expression, expressed by the venom gland.

The protein localises to the secreted. Its function is as follows. Ion channel inhibitor. This Trittame loki (Brush-footed trapdoor spider) protein is U16-barytoxin-Tl1d.